A 67-amino-acid chain; its full sequence is Probable pilin MJ1400 (67 aa).

Positions 1 to 13 (MKFIMKFIKSNKG) are excised as a propeptide. Positions 14–22 (QISLEFSLL) match the QXSXEXXXL motif.

Post-translationally, the N-terminus is cleaved by the prepilin peptidase EppA, which recognizes the class III signal sequence.

The protein localises to the secreted. The protein resides in the cell surface. It localises to the fimbrium. The chain is Probable pilin MJ1400 from Methanocaldococcus jannaschii (strain ATCC 43067 / DSM 2661 / JAL-1 / JCM 10045 / NBRC 100440) (Methanococcus jannaschii).